The following is a 183-amino-acid chain: Large ribosomal subunit protein uL6 (183 aa).

The protein belongs to the universal ribosomal protein uL6 family. As to quaternary structure, part of the 50S ribosomal subunit.

In terms of biological role, this protein binds to the 23S rRNA, and is important in its secondary structure. It is located near the subunit interface in the base of the L7/L12 stalk, and near the tRNA binding site of the peptidyltransferase center. This is Large ribosomal subunit protein uL6 from Chlamydia pneumoniae (Chlamydophila pneumoniae).